Consider the following 624-residue polypeptide: Prickle planar cell polarity protein 3 (624 aa).

Residues methionine 1–glycine 12 show a composition bias toward basic residues. The tract at residues methionine 1 to proline 26 is disordered. The 109-residue stretch at serine 74–threonine 182 folds into the PET domain. LIM zinc-binding domains follow at residues alanine 184–proline 249, arginine 250–glutamate 309, and tyrosine 310–threonine 373. Positions glutamate 371–arginine 617 are disordered. Low complexity predominate over residues serine 383–serine 409. Residues proline 447–alanine 458 are compositionally biased toward pro residues. A phosphoserine mark is found at serine 475 and serine 491. The span at serine 509–histidine 541 shows a compositional bias: basic residues. Residues leucine 545–glutamate 564 show a composition bias toward low complexity. Polar residues predominate over residues arginine 587 to alanine 601.

This sequence belongs to the prickle / espinas / testin family. Interacts with VANGL2 via its C-terminus. The VANGL2-dependent membrane recruitment of PRICKLE3 is a prerequisite for its polarization. Interacts with WTIP. WTIP is involved in the recruitment of PRICKLE3 to the basal body. Interacts with MT-ATP8, a component of the mitochondrial complex V. Widely expressed.

The protein resides in the cytoplasm. The protein localises to the cell membrane. It localises to the mitochondrion. Involved in the planar cell polarity (PCP) pathway that is essential for the polarization of epithelial cells during morphogenetic processes, including gastrulation and neurulation. PCP is maintained by two molecular modules, the global and the core modules, PRICKLE3 being part of the core module. Distinct complexes of the core module segregate to opposite sides of the cell, where they interact with the opposite complex in the neighboring cell at or near the adherents junctions. Involved in the organization of the basal body. Involved in cilia growth and positioning. Required for proper assembly, stability, and function of mitochondrial membrane ATP synthase (mitochondrial complex V). The protein is Prickle planar cell polarity protein 3 of Mus musculus (Mouse).